The following is a 34-amino-acid chain: Mytilin-A (34 aa).

Disulfide bonds link cysteine 2-cysteine 27, cysteine 6-cysteine 29, cysteine 10-cysteine 31, and cysteine 15-cysteine 34.

Its subcellular location is the secreted. Functionally, has antibacterial activity against A.viridans, B.megaterium, M.luteus, E.faecalis, S.aureus and E.coli. It is active against the marine species A.carrageenovora, P.alginovora and C.drobachiensis. The polypeptide is Mytilin-A (Mytilus edulis (Blue mussel)).